A 302-amino-acid polypeptide reads, in one-letter code: 5'-3' exonuclease (302 aa).

The 97-residue stretch at 173–269 folds into the 5'-3' exonuclease domain; it reads IPKLIPDLLG…NITTKKIKML (97 aa).

Its function is as follows. 5'-3' exonuclease acting preferentially on double-stranded DNA. The polypeptide is 5'-3' exonuclease (pol) (Buchnera aphidicola subsp. Baizongia pistaciae (strain Bp)).